The sequence spans 140 residues: Nucleoside diphosphate kinase (140 aa).

K11, F59, R87, T93, R104, and N114 together coordinate ATP. Catalysis depends on H117, which acts as the Pros-phosphohistidine intermediate.

The protein belongs to the NDK family. Homotetramer. Mg(2+) serves as cofactor.

The protein localises to the cytoplasm. It catalyses the reaction a 2'-deoxyribonucleoside 5'-diphosphate + ATP = a 2'-deoxyribonucleoside 5'-triphosphate + ADP. The catalysed reaction is a ribonucleoside 5'-diphosphate + ATP = a ribonucleoside 5'-triphosphate + ADP. Major role in the synthesis of nucleoside triphosphates other than ATP. The ATP gamma phosphate is transferred to the NDP beta phosphate via a ping-pong mechanism, using a phosphorylated active-site intermediate. This chain is Nucleoside diphosphate kinase, found in Dinoroseobacter shibae (strain DSM 16493 / NCIMB 14021 / DFL 12).